A 396-amino-acid polypeptide reads, in one-letter code: S-adenosylmethionine synthase (396 aa).

ATP is bound at residue His-15. Asp-17 is a Mg(2+) binding site. A K(+)-binding site is contributed by Glu-43. 2 residues coordinate L-methionine: Glu-56 and Gln-99. Residues 99-109 (QSSDIAQGVDR) are flexible loop. ATP is bound by residues 175 to 177 (DGK), 241 to 242 (RF), Asp-250, 256 to 257 (RK), Ser-273, and Lys-277. Asp-250 is an L-methionine binding site. Lys-281 contacts L-methionine.

Belongs to the AdoMet synthase family. In terms of assembly, homotetramer; dimer of dimers. Requires Mg(2+) as cofactor. The cofactor is K(+).

It is found in the cytoplasm. The catalysed reaction is L-methionine + ATP + H2O = S-adenosyl-L-methionine + phosphate + diphosphate. Its pathway is amino-acid biosynthesis; S-adenosyl-L-methionine biosynthesis; S-adenosyl-L-methionine from L-methionine: step 1/1. Catalyzes the formation of S-adenosylmethionine (AdoMet) from methionine and ATP. The overall synthetic reaction is composed of two sequential steps, AdoMet formation and the subsequent tripolyphosphate hydrolysis which occurs prior to release of AdoMet from the enzyme. The polypeptide is S-adenosylmethionine synthase (Pelotomaculum thermopropionicum (strain DSM 13744 / JCM 10971 / SI)).